The primary structure comprises 330 residues: Aspartate--ammonia ligase (330 aa).

It belongs to the class-II aminoacyl-tRNA synthetase family. AsnA subfamily.

The protein resides in the cytoplasm. The catalysed reaction is L-aspartate + NH4(+) + ATP = L-asparagine + AMP + diphosphate + H(+). The protein operates within amino-acid biosynthesis; L-asparagine biosynthesis; L-asparagine from L-aspartate (ammonia route): step 1/1. The protein is Aspartate--ammonia ligase of Streptococcus equi subsp. zooepidemicus (strain H70).